A 309-amino-acid polypeptide reads, in one-letter code: Pantoate--beta-alanine ligase (309 aa).

Belongs to the pantothenate synthetase family.

The protein localises to the cytoplasm. It localises to the nucleus. The catalysed reaction is (R)-pantoate + beta-alanine + ATP = (R)-pantothenate + AMP + diphosphate + H(+). It participates in cofactor biosynthesis; (R)-pantothenate biosynthesis; (R)-pantothenate from (R)-pantoate and beta-alanine: step 1/1. In terms of biological role, required for pantothenic acid biosynthesis. This Saccharomyces cerevisiae (strain ATCC 204508 / S288c) (Baker's yeast) protein is Pantoate--beta-alanine ligase (PAN6).